The primary structure comprises 173 residues: Pathogenesis-related protein 1A/1B (173 aa).

The N-terminal stretch at 1–20 is a signal peptide; sequence MSTSAVLFLLLAVFAAGASA.

The protein belongs to the thaumatin family.

This Hordeum vulgare (Barley) protein is Pathogenesis-related protein 1A/1B.